A 39-amino-acid chain; its full sequence is Photosystem II reaction center protein L (39 aa).

The helical transmembrane segment at 18–38 (SLYLGLLLIAVLGILFSSYFF) threads the bilayer.

It belongs to the PsbL family. In terms of assembly, PSII is composed of 1 copy each of membrane proteins PsbA, PsbB, PsbC, PsbD, PsbE, PsbF, PsbH, PsbI, PsbJ, PsbK, PsbL, PsbM, PsbT, PsbX, PsbY, PsbZ, Psb30/Ycf12, peripheral proteins PsbO, CyanoQ (PsbQ), PsbU, PsbV and a large number of cofactors. It forms dimeric complexes.

Its subcellular location is the cellular thylakoid membrane. In terms of biological role, one of the components of the core complex of photosystem II (PSII). PSII is a light-driven water:plastoquinone oxidoreductase that uses light energy to abstract electrons from H(2)O, generating O(2) and a proton gradient subsequently used for ATP formation. It consists of a core antenna complex that captures photons, and an electron transfer chain that converts photonic excitation into a charge separation. This subunit is found at the monomer-monomer interface and is required for correct PSII assembly and/or dimerization. The protein is Photosystem II reaction center protein L of Picosynechococcus sp. (strain ATCC 27264 / PCC 7002 / PR-6) (Agmenellum quadruplicatum).